Consider the following 1270-residue polypeptide: Vigilin (1270 aa).

Polar residues predominate over residues 1-11 (MSSVAVLTQES). Disordered regions lie at residues 1–23 (MSSV…TQQQ) and 28–47 (ALNS…FPPL). KH domains follow at residues 150–188 (ASAT…IPRP), 219–260 (DKRA…IPPP), 291–333 (KKKT…IPPT), 360–402 (ANSF…EFTE), 431–473 (INRT…IPPD), 504–545 (ENER…NFPD), 577–619 (VENS…LPGR), 651–693 (ANIT…FPTE), 724–766 (QTKS…FPTS), 798–840 (DNVV…LPTV), and 872–913 (EAQV…FPDR). A disordered region spans residues 911 to 947 (PDREENPAPVAEPALQENGEEGGEGKDGKDADPSSPR). A compositionally biased stretch (basic and acidic residues) spans 933–947 (GEGKDGKDADPSSPR). KH domains lie at 970–1012 (ALVP…VPAP), 1051–1093 (ALRS…FPDK), and 1126–1168 (LEQM…FPQS). The tract at residues 1217 to 1270 (SHEESKVPSKGFVVRDAPCGTVNNEKAPDMSSSEDFPSFGAQVAPKTLPWGPKR) is disordered.

Its subcellular location is the cytoplasm. This Gallus gallus (Chicken) protein is Vigilin (HDLBP).